The following is a 159-amino-acid chain: Large ribosomal subunit protein mL50 (159 aa).

It belongs to the mitochondrion-specific ribosomal protein mL50 family. As to quaternary structure, component of the mitochondrial ribosome large subunit (39S) which comprises a 16S rRNA and about 50 distinct proteins.

The protein resides in the mitochondrion. This is Large ribosomal subunit protein mL50 (Mrpl50) from Mus musculus (Mouse).